The following is a 486-amino-acid chain: B-type cell cycle switch protein ccs52B (486 aa).

The PEST motif signature appears at 24–36 (RLETLSTPPSSAS). The segment covering 27–36 (TLSTPPSSAS) has biased composition (polar residues). The tract at residues 27 to 57 (TLSTPPSSASPRAISNLSSTPSPSKSSKCSD) is disordered. Over residues 41–53 (SNLSSTPSPSKSS) the composition is skewed to low complexity. A C-box motif is present at residues 57-63 (DRFIPCR). The CSM motif motif lies at 87–98 (AYNRLLKSELFG). 7 WD repeats span residues 177–214 (QDDF…VTKL), 218–257 (GPYD…KVRT), 260–297 (GHQT…DFIG), 301–340 (GHKS…PTLR), 343–385 (EHTA…QLNS), 387–428 (DTGS…KVAT), and 431–470 (GHSM…KTPA).

It belongs to the WD repeat CDC20/Fizzy family. In terms of tissue distribution, mostly expressed in shoot apices and, to a lower extent, in roots, especially in root tips, and in hypocotyls. Expressed in nodulation-competent root zone but not in the nodules.

It participates in protein modification; protein ubiquitination. Its function is as follows. Component of the anaphase promoting complex/cyclosome (APC/C), a cell cycle-regulated E3 ubiquitin-protein ligase complex that controls progression through mitosis and the G1 phase of the cell cycle. This is B-type cell cycle switch protein ccs52B from Medicago truncatula (Barrel medic).